We begin with the raw amino-acid sequence, 277 residues long: 3-methyl-2-oxobutanoate hydroxymethyltransferase (277 aa).

Mg(2+)-binding residues include Asp43 and Asp82. 3-methyl-2-oxobutanoate is bound by residues 43–44 (DS), Asp82, and Lys112. Position 114 (Glu114) interacts with Mg(2+). Catalysis depends on Glu181, which acts as the Proton acceptor.

This sequence belongs to the PanB family. In terms of assembly, homodecamer; pentamer of dimers. The cofactor is Mg(2+).

It is found in the cytoplasm. It catalyses the reaction 3-methyl-2-oxobutanoate + (6R)-5,10-methylene-5,6,7,8-tetrahydrofolate + H2O = 2-dehydropantoate + (6S)-5,6,7,8-tetrahydrofolate. It participates in cofactor biosynthesis; (R)-pantothenate biosynthesis; (R)-pantoate from 3-methyl-2-oxobutanoate: step 1/2. Its function is as follows. Catalyzes the reversible reaction in which hydroxymethyl group from 5,10-methylenetetrahydrofolate is transferred onto alpha-ketoisovalerate to form ketopantoate. In Listeria monocytogenes serotype 4a (strain HCC23), this protein is 3-methyl-2-oxobutanoate hydroxymethyltransferase.